A 118-amino-acid chain; its full sequence is Holo-[acyl-carrier-protein] synthase (118 aa).

Aspartate 5 and glutamate 50 together coordinate Mg(2+).

This sequence belongs to the P-Pant transferase superfamily. AcpS family. Mg(2+) serves as cofactor.

Its subcellular location is the cytoplasm. It catalyses the reaction apo-[ACP] + CoA = holo-[ACP] + adenosine 3',5'-bisphosphate + H(+). Transfers the 4'-phosphopantetheine moiety from coenzyme A to a Ser of acyl-carrier-protein. The protein is Holo-[acyl-carrier-protein] synthase of Wolinella succinogenes (strain ATCC 29543 / DSM 1740 / CCUG 13145 / JCM 31913 / LMG 7466 / NCTC 11488 / FDC 602W) (Vibrio succinogenes).